Consider the following 111-residue polypeptide: Probable 4-amino-4-deoxy-L-arabinose-phosphoundecaprenol flippase subunit ArnE (111 aa).

The Cytoplasmic portion of the chain corresponds to 1 to 35; the sequence is MIWLTLVFASLLSVAGQLCQKQATCFVAINKRRKH. A helical membrane pass occupies residues 36–56; it reads IVLWLGLALACLGLAMVLWLL. One can recognise an EamA domain in the interval 40-109; that stretch reads LGLALACLGL…IIGGIVILGS (70 aa). The Periplasmic portion of the chain corresponds to 57–60; that stretch reads VLQN. A helical transmembrane segment spans residues 61 to 81; that stretch reads VPVGIAYPMLSLNFVWVTLAA. The Cytoplasmic portion of the chain corresponds to 82 to 87; sequence VKLWHE. A helical membrane pass occupies residues 88-108; that stretch reads PVSPRHWCGVAFIIGGIVILG. Residues 109–111 are Periplasmic-facing; the sequence is STV.

The protein belongs to the ArnE family. Heterodimer of ArnE and ArnF.

The protein localises to the cell inner membrane. It functions in the pathway bacterial outer membrane biogenesis; lipopolysaccharide biosynthesis. In terms of biological role, translocates 4-amino-4-deoxy-L-arabinose-phosphoundecaprenol (alpha-L-Ara4N-phosphoundecaprenol) from the cytoplasmic to the periplasmic side of the inner membrane. This Escherichia coli (strain ATCC 8739 / DSM 1576 / NBRC 3972 / NCIMB 8545 / WDCM 00012 / Crooks) protein is Probable 4-amino-4-deoxy-L-arabinose-phosphoundecaprenol flippase subunit ArnE.